A 692-amino-acid chain; its full sequence is Elongation factor G 1 (692 aa).

Residues 8-283 (EKTRNIGIMA…SVVEYLPSPV (276 aa)) form the tr-type G domain. GTP contacts are provided by residues 17–24 (AHIDAGKT), 81–85 (DTPGH), and 135–138 (NKMD).

Belongs to the TRAFAC class translation factor GTPase superfamily. Classic translation factor GTPase family. EF-G/EF-2 subfamily.

It localises to the cytoplasm. Functionally, catalyzes the GTP-dependent ribosomal translocation step during translation elongation. During this step, the ribosome changes from the pre-translocational (PRE) to the post-translocational (POST) state as the newly formed A-site-bound peptidyl-tRNA and P-site-bound deacylated tRNA move to the P and E sites, respectively. Catalyzes the coordinated movement of the two tRNA molecules, the mRNA and conformational changes in the ribosome. The sequence is that of Elongation factor G 1 from Geobacter metallireducens (strain ATCC 53774 / DSM 7210 / GS-15).